The following is a 93-amino-acid chain: uncharacterized protein (93 aa).

This is an uncharacterized protein from Rickettsia conorii (strain ATCC VR-613 / Malish 7).